The sequence spans 402 residues: Nicotinate phosphoribosyltransferase (402 aa).

The residue at position 224 (H224) is a Phosphohistidine; by autocatalysis.

It belongs to the NAPRTase family. In terms of processing, transiently phosphorylated on a His residue during the reaction cycle. Phosphorylation strongly increases the affinity for substrates and increases the rate of nicotinate D-ribonucleotide production. Dephosphorylation regenerates the low-affinity form of the enzyme, leading to product release.

The catalysed reaction is nicotinate + 5-phospho-alpha-D-ribose 1-diphosphate + ATP + H2O = nicotinate beta-D-ribonucleotide + ADP + phosphate + diphosphate. It functions in the pathway cofactor biosynthesis; NAD(+) biosynthesis; nicotinate D-ribonucleotide from nicotinate: step 1/1. Its function is as follows. Catalyzes the synthesis of beta-nicotinate D-ribonucleotide from nicotinate and 5-phospho-D-ribose 1-phosphate at the expense of ATP. The chain is Nicotinate phosphoribosyltransferase from Neisseria meningitidis serogroup A / serotype 4A (strain DSM 15465 / Z2491).